A 1220-amino-acid polypeptide reads, in one-letter code: Plasma membrane calcium-transporting ATPase 1 (1220 aa).

Gly-2 carries the post-translational modification N-acetylglycine. The Cytoplasmic segment spans residues 2-105 (GDMANNSVAY…KTFLQLVWEA (104 aa)). A phosphoserine mark is found at Ser-8 and Ser-17. A helical transmembrane segment spans residues 106-126 (LQDVTLIILEIAAIVSLGLSF). Residues 127–154 (YQPPEGDNALCGEVSVGEEEGEGETGWI) lie on the Extracellular side of the membrane. A helical membrane pass occupies residues 155 to 175 (EGAAILLSVVCVVLVTAFNDW). The Cytoplasmic portion of the chain corresponds to 176–366 (SKEKQFRGLQ…KEKSVLQGKL (191 aa)). The tract at residues 297–356 (EEEKKDEKKKEKKNKKQDGAIENRNKAKAQDGAAMEMQPLKSEEGGDGDEKDKKKANLPK) is disordered. Composition is skewed to basic and acidic residues over residues 312-325 (KQDG…KAKA) and 337-356 (KSEE…NLPK). Residue Ser-338 is modified to Phosphoserine. A helical membrane pass occupies residues 367-386 (TKLAVQIGKAGLLMSAITVI). Over 387 to 418 (ILVLYFVIDTFWVQKRPWLAECTPIYIQYFVK) the chain is Extracellular. The helical transmembrane segment at 419-439 (FFIIGVTVLVVAVPEGLPLAV) threads the bilayer. Topologically, residues 440 to 855 (TISLAYSVKK…RNVYDSISKF (416 aa)) are cytoplasmic. Asp-475 (4-aspartylphosphate intermediate) is an active-site residue. The Mg(2+) site is built by Asp-475, Thr-477, and Asp-797. Residues 856–876 (LQFQLTVNVVAVIVAFTGACI) form a helical membrane-spanning segment. The Extracellular portion of the chain corresponds to 877-882 (TQDSPL). A helical membrane pass occupies residues 883–903 (KAVQMLWVNLIMDTLASLALA). Topologically, residues 904 to 927 (TEPPTESLLLRKPYGRNKPLISRT) are cytoplasmic. The helical transmembrane segment at 928–948 (MMKNILGHAFYQLVVVFTLLF) threads the bilayer. Residues 949–971 (AGEKFFDIDSGRNAPLHAPPSEH) lie on the Extracellular side of the membrane. A helical membrane pass occupies residues 972–991 (YTIVFNTFVLMQLFNEINAR). Residues 992–1005 (KIHGERNVFEGIFN) are Cytoplasmic-facing. A helical transmembrane segment spans residues 1006–1027 (NAIFCTIVLGTFVVQIIIVQFG). Residues 1028 to 1039 (GKPFSCSELSIE) lie on the Extracellular side of the membrane. A helical membrane pass occupies residues 1040-1060 (QWLWSIFLGMGTLLWGQLIST). The Cytoplasmic portion of the chain corresponds to 1061–1220 (IPTSRLKFLK…SPLHSLETSL (160 aa)). The segment at 1100-1117 (LRRGQILWFRGLNRIQTQ) is calmodulin-binding subdomain A. The residue at position 1116 (Thr-1116) is a Phosphothreonine; by PKC. The tract at residues 1118–1220 (IRVVNAFRSS…SPLHSLETSL (103 aa)) is required for basolateral membrane targeting. 2 positions are modified to phosphoserine: Ser-1140 and Ser-1155. The tract at residues 1160 to 1220 (PLIDDTDAED…SPLHSLETSL (61 aa)) is disordered. Thr-1165 is modified (phosphothreonine). Residue Ser-1178 is modified to Phosphoserine; by PKA. A Phosphoserine modification is found at Ser-1182. Residues 1200–1220 (MNKSATSSSPGSPLHSLETSL) show a composition bias toward polar residues.

Belongs to the cation transport ATPase (P-type) (TC 3.A.3) family. Type IIB subfamily. Monomer. Dimer. Oligomer. Calmodulin binding. Interacts with PDZD11. Interacts with SLC35G1 and STIM1; inhibits calcium-transporting ATPase activity after store depletion. Interacts with YWHAE; interacts with the monomeric and dimeric forms of the YWHAE but prefer the monomer form; this interaction inhibits calcium-transporting ATPase activity. Interacts with NPTN; this interaction stabilizes ATP2B1 and increases ATPase activity; this interaction controls T cell calcium homeostasis following T cell activation. Interacts with EPB41; regulates small intestinal calcium absorption through regulation of membrane expression of ATP2B1. Isoform B: Ubiquitously expressed. Isoform C: Found in brain cortex, skeletal muscle and heart muscle. Isoform D: Has only been found in fetal skeletal muscle. Isoform K: Found in small intestine and liver. Abundantly expressed in the endometrial epithelial cells and glandular epithelial cells in early-proliferative phase and early-secretory phases.

It localises to the cell membrane. The protein resides in the basolateral cell membrane. Its subcellular location is the synapse. It is found in the presynaptic cell membrane. The protein localises to the cytoplasmic vesicle. It localises to the secretory vesicle. The protein resides in the synaptic vesicle membrane. It catalyses the reaction Ca(2+)(in) + ATP + H2O = Ca(2+)(out) + ADP + phosphate + H(+). Catalyzes the hydrolysis of ATP coupled with the transport of calcium from the cytoplasm to the extracellular space thereby maintaining intracellular calcium homeostasis. Plays a role in blood pressure regulation through regulation of intracellular calcium concentration and nitric oxide production leading to regulation of vascular smooth muscle cells vasoconstriction. Positively regulates bone mineralization through absorption of calcium from the intestine. Plays dual roles in osteoclast differentiation and survival by regulating RANKL-induced calcium oscillations in preosteoclasts and mediating calcium extrusion in mature osteoclasts. Regulates insulin sensitivity through calcium/calmodulin signaling pathway by regulating AKT1 activation and NOS3 activation in endothelial cells. May play a role in synaptic transmission by modulating calcium and proton dynamics at the synaptic vesicles. In Homo sapiens (Human), this protein is Plasma membrane calcium-transporting ATPase 1.